Here is a 957-residue protein sequence, read N- to C-terminus: Nitrite reductase [NAD(P)H] large subunit (957 aa).

44–79 (YDRVHLTEYFAGRSAESLSLVEGDFFTQHGIELRLS) serves as a coordination point for FAD. Position 193–225 (193–225 (LREKISELGVGVHTSKATTEIVRNEQGLQLNFR)) interacts with NAD(+). [2Fe-2S] cluster is bound by residues Cys-423, Cys-425, Cys-457, and Cys-460. 4 residues coordinate [4Fe-4S] cluster: Cys-639, Cys-645, Cys-679, and Cys-683. Cys-683 serves as a coordination point for siroheme.

It belongs to the nitrite and sulfite reductase 4Fe-4S domain family. As to quaternary structure, homodimer which associates with NirD. The cofactor is siroheme. It depends on [2Fe-2S] cluster as a cofactor. [4Fe-4S] cluster serves as cofactor. Requires FAD as cofactor.

The catalysed reaction is NH4(+) + 3 NADP(+) + 2 H2O = nitrite + 3 NADPH + 5 H(+). The enzyme catalyses NH4(+) + 3 NAD(+) + 2 H2O = nitrite + 3 NADH + 5 H(+). It participates in nitrogen metabolism; nitrate reduction (assimilation). The polypeptide is Nitrite reductase [NAD(P)H] large subunit (nasB) (Klebsiella oxytoca).